A 552-amino-acid chain; its full sequence is Putative transport protein APJL_0985 (552 aa).

The next 5 membrane-spanning stretches (helical) occupy residues 4-24, 29-49, 65-85, 95-115, and 161-181; these read IAII…IGHI, VGLG…CTHL, FGLI…FFAS, GFAV…HKLF, and IAYP…RIIF. RCK C-terminal domains lie at 190-275 and 277-360; these read QEFD…ILGE and ADVS…IIGD. 6 helical membrane-spanning segments follow: residues 370–390, 403–425, 438–458, 463–483, 492–512, and 529–549; these read MLPI…PLYL, GGPL…YWFM, IVLF…DTLL, LAWM…TGFV, YLSL…LAFA, and VYPL…ILLW.

The protein belongs to the AAE transporter (TC 2.A.81) family. YidE subfamily.

It localises to the cell membrane. The sequence is that of Putative transport protein APJL_0985 from Actinobacillus pleuropneumoniae serotype 3 (strain JL03).